The sequence spans 346 residues: RNA polymerase II holoenzyme cyclin-like subunit (346 aa).

The 100-residue stretch at Asn59 to His158 folds into the Cyclin N-terminal domain.

It belongs to the cyclin family. Cyclin C subfamily. Component of the SRB8-11 complex, a regulatory module of the Mediator complex.

It is found in the nucleus. Functionally, component of the SRB8-11 complex. The SRB8-11 complex is a regulatory module of the Mediator complex which is itself involved in regulation of basal and activated RNA polymerase II-dependent transcription. The SRB8-11 complex may be involved in the transcriptional repression of a subset of genes regulated by Mediator. It may inhibit the association of the Mediator complex with RNA polymerase II to form the holoenzyme complex. The SRB8-11 complex phosphorylates the C-terminal domain (CTD) of the largest subunit of RNA polymerase II. This is RNA polymerase II holoenzyme cyclin-like subunit (SSN8) from Scheffersomyces stipitis (strain ATCC 58785 / CBS 6054 / NBRC 10063 / NRRL Y-11545) (Yeast).